Consider the following 115-residue polypeptide: Putative gamma-glutamylcyclotransferase VC_2546 (115 aa).

Residue 8–11 (YGTL) coordinates substrate. The active-site Proton acceptor is the Glu73.

Belongs to the gamma-glutamylcyclotransferase family.

Functionally, putative gamma-glutamylcyclotransferase. This chain is Putative gamma-glutamylcyclotransferase VC_2546, found in Vibrio cholerae serotype O1 (strain ATCC 39315 / El Tor Inaba N16961).